The primary structure comprises 101 residues: Small ribosomal subunit protein uS14 (101 aa).

It belongs to the universal ribosomal protein uS14 family. As to quaternary structure, part of the 30S ribosomal subunit. Contacts proteins S3 and S10.

In terms of biological role, binds 16S rRNA, required for the assembly of 30S particles and may also be responsible for determining the conformation of the 16S rRNA at the A site. The chain is Small ribosomal subunit protein uS14 from Arthrobacter sp. (strain FB24).